The chain runs to 1139 residues: Ras GTPase-activating protein nGAP (1139 aa).

Residues 1–87 (MQTPEVPAER…SRGLPKLKES (87 aa)) are disordered. S16 carries the phosphoserine modification. Over residues 17–36 (ISGTSTSEKPNSMDTANTSP) the composition is skewed to polar residues. Residues 41–158 (GFFSKRLKGS…WMENLRRTVQ (118 aa)) form the PH domain. Residues 45-56 (KRLKGSIKRTKS) show a composition bias toward basic residues. Over residues 73–87 (STDDRSRGLPKLKES) the composition is skewed to basic and acidic residues. S89 is subject to Phosphoserine. Residues 149–267 (WMENLRRTVQ…TGRQFVEKWY (119 aa)) enclose the C2 domain. Residues 343-551 (GRAKDFLTDL…GGMKRFLLEI (209 aa)) form the Ras-GAP domain. The residue at position 620 (T620) is a Phosphothreonine. Phosphoserine is present on S663. Disordered regions lie at residues 684 to 704 (ASSQ…LPNG), 751 to 782 (ETQS…LSFQ), 803 to 869 (SLEN…GQAQ), 910 to 953 (EPVQ…SATM), and 1116 to 1139 (NGIS…NSSC). Composition is skewed to polar residues over residues 751–760 (ETQSTPQSAP) and 803–818 (SLEN…QSNS). The segment covering 833-855 (DFTKRSTQSEDFSRRHTVPDRHI) has biased composition (basic and acidic residues). At S864 the chain carries Phosphoserine. The segment covering 916-928 (SRSRQQSSSSRES) has biased composition (low complexity).

In terms of assembly, interacts with PEAK1.

Its function is as follows. Inhibitory regulator of the Ras-cyclic AMP pathway. The chain is Ras GTPase-activating protein nGAP (RASAL2) from Homo sapiens (Human).